Consider the following 245-residue polypeptide: 1-(5-phosphoribosyl)-5-[(5-phosphoribosylamino)methylideneamino] imidazole-4-carboxamide isomerase (245 aa).

The active-site Proton acceptor is the aspartate 7. Aspartate 129 acts as the Proton donor in catalysis.

The protein belongs to the HisA/HisF family.

It is found in the cytoplasm. It catalyses the reaction 1-(5-phospho-beta-D-ribosyl)-5-[(5-phospho-beta-D-ribosylamino)methylideneamino]imidazole-4-carboxamide = 5-[(5-phospho-1-deoxy-D-ribulos-1-ylimino)methylamino]-1-(5-phospho-beta-D-ribosyl)imidazole-4-carboxamide. The protein operates within amino-acid biosynthesis; L-histidine biosynthesis; L-histidine from 5-phospho-alpha-D-ribose 1-diphosphate: step 4/9. This is 1-(5-phosphoribosyl)-5-[(5-phosphoribosylamino)methylideneamino] imidazole-4-carboxamide isomerase from Enterobacter sp. (strain 638).